Reading from the N-terminus, the 401-residue chain is Imidazolonepropionase (401 aa).

Fe(3+) is bound by residues His66 and His68. Residues His66 and His68 each contribute to the Zn(2+) site. The 4-imidazolone-5-propanoate site is built by Arg75, Tyr138, and His171. Tyr138 serves as a coordination point for N-formimidoyl-L-glutamate. Residue His236 participates in Fe(3+) binding. Residue His236 coordinates Zn(2+). A 4-imidazolone-5-propanoate-binding site is contributed by Gln239. Asp311 is a Fe(3+) binding site. Residue Asp311 participates in Zn(2+) binding. 2 residues coordinate N-formimidoyl-L-glutamate: Asn313 and Gly315. Position 316 (Thr316) interacts with 4-imidazolone-5-propanoate.

It belongs to the metallo-dependent hydrolases superfamily. HutI family. The cofactor is Zn(2+). It depends on Fe(3+) as a cofactor.

It is found in the cytoplasm. The enzyme catalyses 4-imidazolone-5-propanoate + H2O = N-formimidoyl-L-glutamate. Its pathway is amino-acid degradation; L-histidine degradation into L-glutamate; N-formimidoyl-L-glutamate from L-histidine: step 3/3. Functionally, catalyzes the hydrolytic cleavage of the carbon-nitrogen bond in imidazolone-5-propanoate to yield N-formimidoyl-L-glutamate. It is the third step in the universal histidine degradation pathway. This chain is Imidazolonepropionase, found in Pseudomonas putida (Arthrobacter siderocapsulatus).